The primary structure comprises 118 residues: Large ribosomal subunit protein uL24 (118 aa).

The protein belongs to the universal ribosomal protein uL24 family. Part of the 50S ribosomal subunit.

Functionally, one of two assembly initiator proteins, it binds directly to the 5'-end of the 23S rRNA, where it nucleates assembly of the 50S subunit. Its function is as follows. One of the proteins that surrounds the polypeptide exit tunnel on the outside of the subunit. The protein is Large ribosomal subunit protein uL24 of Prochlorococcus marinus (strain MIT 9301).